The sequence spans 151 residues: Aspartate carbamoyltransferase regulatory chain (151 aa).

Zn(2+) is bound by residues C107, C112, C135, and C138.

Belongs to the PyrI family. As to quaternary structure, contains catalytic and regulatory chains. It depends on Zn(2+) as a cofactor.

Functionally, involved in allosteric regulation of aspartate carbamoyltransferase. The protein is Aspartate carbamoyltransferase regulatory chain of Thermococcus gammatolerans (strain DSM 15229 / JCM 11827 / EJ3).